A 412-amino-acid chain; its full sequence is Alanyl-tRNA editing protein Aarsd1-B (412 aa).

Zn(2+)-binding residues include His108, His112, Cys208, and His212.

This sequence belongs to the class-II aminoacyl-tRNA synthetase family. Alax-L subfamily. Zn(2+) serves as cofactor.

The protein localises to the cytoplasm. Functionally, functions in trans to edit the amino acid moiety from incorrectly charged tRNA(Ala). The polypeptide is Alanyl-tRNA editing protein Aarsd1-B (aarsd1-b) (Xenopus laevis (African clawed frog)).